A 445-amino-acid chain; its full sequence is Phosphoglucosamine mutase (445 aa).

Serine 102 functions as the Phosphoserine intermediate in the catalytic mechanism. The Mg(2+) site is built by serine 102, aspartate 241, aspartate 243, and aspartate 245. Serine 102 is modified (phosphoserine).

This sequence belongs to the phosphohexose mutase family. Requires Mg(2+) as cofactor. Activated by phosphorylation.

The enzyme catalyses alpha-D-glucosamine 1-phosphate = D-glucosamine 6-phosphate. In terms of biological role, catalyzes the conversion of glucosamine-6-phosphate to glucosamine-1-phosphate. The protein is Phosphoglucosamine mutase of Haemophilus influenzae (strain 86-028NP).